The chain runs to 237 residues: Proteasome subunit alpha type-5 (237 aa).

Belongs to the peptidase T1A family. As to quaternary structure, the 26S proteasome consists of a 20S proteasome core and two 19S regulatory subunits. The 20S proteasome core is composed of 28 subunits that are arranged in four stacked rings, resulting in a barrel-shaped structure. The two end rings are each formed by seven alpha subunits, and the two central rings are each formed by seven beta subunits. The catalytic chamber with the active sites is on the inside of the barrel.

Its subcellular location is the cytoplasm. The protein resides in the nucleus. In terms of biological role, the proteasome is a multicatalytic proteinase complex which is characterized by its ability to cleave peptides with Arg, Phe, Tyr, Leu, and Glu adjacent to the leaving group at neutral or slightly basic pH. The proteasome has an ATP-dependent proteolytic activity. The sequence is that of Proteasome subunit alpha type-5 (PAE1) from Oryza sativa subsp. japonica (Rice).